The primary structure comprises 150 residues: Large ribosomal subunit protein bL17 (150 aa).

The interval 126–150 (DRAKRREERLKAQREGRDHEEETDE) is disordered.

This sequence belongs to the bacterial ribosomal protein bL17 family. Part of the 50S ribosomal subunit. Contacts protein L32.

This chain is Large ribosomal subunit protein bL17, found in Solibacter usitatus (strain Ellin6076).